Here is a 557-residue protein sequence, read N- to C-terminus: NADP-dependent malic enzyme (557 aa).

The active-site Proton donor is the Y91. Residue R144 participates in NADP(+) binding. Substrate contacts are provided by R144 and K162. K162 functions as the Proton acceptor in the catalytic mechanism. Mn(2+)-binding residues include E234 and D235. N238 contributes to the NADP(+) binding site. Residue D258 participates in Mn(2+) binding. Residues 291–294 (AGEA), S325, N397, and N443 each bind NADP(+). N443 serves as a coordination point for substrate.

It belongs to the malic enzymes family. In terms of assembly, homotetramer. Requires Mg(2+) as cofactor. Mn(2+) is required as a cofactor. Post-translationally, the N-terminus is blocked.

Its subcellular location is the cytoplasm. It carries out the reaction (S)-malate + NADP(+) = pyruvate + CO2 + NADPH. The enzyme catalyses oxaloacetate + H(+) = pyruvate + CO2. This is NADP-dependent malic enzyme (ME1) from Columba livia (Rock dove).